The sequence spans 196 residues: Probable inactive nicotinamidase At3g16190 (196 aa).

The protein belongs to the isochorismatase family.

Functionally, does not possess nicotinamidase activity in vitro. This is Probable inactive nicotinamidase At3g16190 from Arabidopsis thaliana (Mouse-ear cress).